The sequence spans 137 residues: Putative pre-16S rRNA nuclease (137 aa).

This sequence belongs to the YqgF nuclease family.

Its subcellular location is the cytoplasm. In terms of biological role, could be a nuclease involved in processing of the 5'-end of pre-16S rRNA. In Flavobacterium psychrophilum (strain ATCC 49511 / DSM 21280 / CIP 103535 / JIP02/86), this protein is Putative pre-16S rRNA nuclease.